The following is a 285-amino-acid chain: Bifunctional protein FolD (285 aa).

NADP(+) contacts are provided by residues 165-167 and serine 190; that span reads GRS.

The protein belongs to the tetrahydrofolate dehydrogenase/cyclohydrolase family. In terms of assembly, homodimer.

The enzyme catalyses (6R)-5,10-methylene-5,6,7,8-tetrahydrofolate + NADP(+) = (6R)-5,10-methenyltetrahydrofolate + NADPH. It catalyses the reaction (6R)-5,10-methenyltetrahydrofolate + H2O = (6R)-10-formyltetrahydrofolate + H(+). Its pathway is one-carbon metabolism; tetrahydrofolate interconversion. Catalyzes the oxidation of 5,10-methylenetetrahydrofolate to 5,10-methenyltetrahydrofolate and then the hydrolysis of 5,10-methenyltetrahydrofolate to 10-formyltetrahydrofolate. The protein is Bifunctional protein FolD of Staphylococcus carnosus (strain TM300).